Reading from the N-terminus, the 1128-residue chain is Phytochrome A (1128 aa).

Residues 1–21 (MSSSRPTQCSSSSSRTRQSSR) are compositionally biased toward low complexity. Residues 1-24 (MSSSRPTQCSSSSSRTRQSSRARI) form a disordered region. Residues 219–404 (SMEVLCNTVV…VFAVHVNKEF (186 aa)) enclose the GAF domain. Cys324 is a phytochromobilin binding site. 2 consecutive PAS domains span residues 620 to 690 (VTSE…LQGK) and 750 to 834 (VEGD…LAGD). In terms of domain architecture, Histidine kinase spans 904-1124 (YMRHAINNPL…TFILSVELAS (221 aa)).

Belongs to the phytochrome family. In terms of assembly, homodimer. Post-translationally, contains one covalently linked phytochromobilin chromophore.

Regulatory photoreceptor which exists in two forms that are reversibly interconvertible by light: the Pr form that absorbs maximally in the red region of the spectrum and the Pfr form that absorbs maximally in the far-red region. Photoconversion of Pr to Pfr induces an array of morphogenic responses, whereas reconversion of Pfr to Pr cancels the induction of those responses. Pfr controls the expression of a number of nuclear genes including those encoding the small subunit of ribulose-bisphosphate carboxylase, chlorophyll A/B binding protein, protochlorophyllide reductase, rRNA, etc. It also controls the expression of its own gene(s) in a negative feedback fashion. This is Phytochrome A (PHYA) from Oryza sativa subsp. indica (Rice).